Here is a 329-residue protein sequence, read N- to C-terminus: Dapdiamide synthesis protein DdaC (329 aa).

The cofactor is Fe(2+).

It participates in antibiotic biosynthesis. Functionally, involved in dapdiamide antibiotics biosynthesis. Catalyzes the alpha-ketoglutarate-dependent epoxidation of the covalently bound N-beta-fumaramoyl-DAP-S-DdaD to generate N-beta-epoxysuccinamoyl-DAP in thioester linkage to DdaD. The sequence is that of Dapdiamide synthesis protein DdaC from Enterobacter agglomerans (Erwinia herbicola).